The chain runs to 76 residues: Gas vesicle protein A1 (76 aa).

Binds to GvpF1 stretches follow at residues 1-22 and 2-43; these read MAQPDSSGLAEVLDRVLDKGVV and AQPD…EARV. Residues 9–19 form an alpha helix 1 region; the sequence is LAEVLDRVLDK. The interval 23 to 31 is beta-strand 1; it reads VDVWARVSL. Positions 32–34 are beta turn; that stretch reads VGI. A beta-strand 2 region spans residues 35-43; it reads EILTVEARV. The segment at 48 to 67 is alpha helix 2; the sequence is VDTFLHYAEEIAKIEQAELT.

Belongs to the gas vesicle GvpA family. As to quaternary structure, major component of the gas vesicle shell which is 2 nm thick and consists of a single layer of the protein. It forms 4.6 nm-wide ribs nearly perpendicular to the long axis of the vesicle. Modeled as antiparallel homodimers. The ribs form a low-pitch helix rather than a stack of hoops. Interacts with GvpF1 via its N-terminus (residues 1-43) in early growth stages, none of the other GvpG1 to GvpM1 proteins were seen to directly bind GvpA1 in H.volcanii experiments. Might interact with GvpJ1. Might interact with GvpG1, GvpH1, GvpJ1, GvpM1, GvpN1 and GvpO1.

It localises to the gas vesicle shell. Gas vesicles are hollow, gas filled proteinaceous nanostructures found in several microbial planktonic microorganisms. They allow positioning of halobacteria at the optimal depth for growth in the poorly aerated shallow brine pools of their habitat. GvpA forms the protein shell. The critical collapse pressure (CCP) of p-vac gas vesicles is 0.66 MPa; mutating residues in p-gvpA to those found in c-gvpA increases the CCP. These residues partially and independently control the width and strength of gas vesicles. In stationary phase gas vesicles, about 30 times more GvpA1 is found than GvpA2. In terms of biological role, expression of a 9.5 kb p-vac DNA fragment containing 2 divergently transcribed regions (gvpD-gvpE-gvpF-gvpG-gvpH-gvpI-gvpJ-gvpK-gvpL-gvpM and gvpA-gvpC-gvpN-gvpO) allows H.volcanii to produce gas vesicles. All site-directed mutagenesis is tested in H.volcanii. A minimal gas vesicle can be made in H.volcanii by gvpA1-gvpO1 plus gvpF1-gvpG1-gvpJ1-gvpK1-gvpL1-gvpM1; lack of enough GvpJ1 prevents their formation. A similar region restores gas vesicle production in H.halobium without the p-vac locus, but it still has the c-vac locus. The chain is Gas vesicle protein A1 from Halobacterium salinarum (strain ATCC 700922 / JCM 11081 / NRC-1) (Halobacterium halobium).